The primary structure comprises 350 residues: Histidinol-phosphate aminotransferase 1 (350 aa).

Lys-209 bears the N6-(pyridoxal phosphate)lysine mark.

This sequence belongs to the class-II pyridoxal-phosphate-dependent aminotransferase family. Histidinol-phosphate aminotransferase subfamily. As to quaternary structure, homodimer. The cofactor is pyridoxal 5'-phosphate.

It carries out the reaction L-histidinol phosphate + 2-oxoglutarate = 3-(imidazol-4-yl)-2-oxopropyl phosphate + L-glutamate. It participates in amino-acid biosynthesis; L-histidine biosynthesis; L-histidine from 5-phospho-alpha-D-ribose 1-diphosphate: step 7/9. This Bradyrhizobium diazoefficiens (strain JCM 10833 / BCRC 13528 / IAM 13628 / NBRC 14792 / USDA 110) protein is Histidinol-phosphate aminotransferase 1 (hisC1).